Reading from the N-terminus, the 445-residue chain is Rab GDP dissociation inhibitor beta (445 aa).

M1 carries the N-acetylmethionine modification. K57 bears the N6-succinyllysine mark. An N6-acetyllysine modification is found at K112. S130 is subject to Phosphoserine. An N6-acetyllysine modification is found at K269. Phosphoserine is present on S382.

The protein belongs to the Rab GDI family. In terms of assembly, interacts with RHOH. Interacts with the GDP-bound inactive forms of RAB3A, RAB3B, RAB3C, RAB5A, RAB5B, RAB5C, RAB8A, RAB8B, RAB10, RAB12, RAB35, and RAB43; binds RAB3D to a lesser extent. Interacts with DZIP1; this interaction negatively regulates the interaction of GDI2 with GDP-bound RAB8A. As to expression, ubiquitously expressed.

Its subcellular location is the cytoplasm. It localises to the membrane. The protein resides in the golgi apparatus. It is found in the trans-Golgi network. Functionally, GDP-dissociation inhibitor preventing the GDP to GTP exchange of most Rab proteins. By keeping these small GTPases in their inactive GDP-bound form regulates intracellular membrane trafficking. Negatively regulates protein transport to the cilium and ciliogenesis through the inhibition of RAB8A. The chain is Rab GDP dissociation inhibitor beta (Gdi2) from Rattus norvegicus (Rat).